The sequence spans 432 residues: Eukaryotic translation initiation factor 3 subunit M (432 aa).

The region spanning E184 to Y356 is the PCI domain. Basic and acidic residues-rich tracts occupy residues A392–V401 and Q423–D432. Positions A392–D432 are disordered.

This sequence belongs to the eIF-3 subunit M family. Component of the eukaryotic translation initiation factor 3 (eIF-3) complex.

The protein resides in the cytoplasm. In terms of biological role, component of the eukaryotic translation initiation factor 3 (eIF-3) complex, which is involved in protein synthesis of a specialized repertoire of mRNAs and, together with other initiation factors, stimulates binding of mRNA and methionyl-tRNAi to the 40S ribosome. The eIF-3 complex specifically targets and initiates translation of a subset of mRNAs involved in cell proliferation. This chain is Eukaryotic translation initiation factor 3 subunit M, found in Pyricularia oryzae (strain 70-15 / ATCC MYA-4617 / FGSC 8958) (Rice blast fungus).